The chain runs to 146 residues: uncharacterized protein (146 aa).

Basic and acidic residues predominate over residues 119–128 (AQADLEHEES). The tract at residues 119-146 (AQADLEHEESASIDQDEMVAIETRKTKK) is disordered.

This is an uncharacterized protein from Schizosaccharomyces pombe (strain 972 / ATCC 24843) (Fission yeast).